A 601-amino-acid chain; its full sequence is MKATGTFFFVVGPSGAGKDSLIDGARAALDGDYVFARRVITRPDGSAGEEHEGVTEAEFARRQRSGEFLVTWDAHDLRYGLPKSLMCELERGRNVVANGSRGVIAELAARLPRFVVVLVTAPHDVLARRIAARGRESGDQVASRVARAGAPVPPHVPCITVSNHSTLEAGTARFVEALRTGTRTSAAERPASRTNLMAKLRGEPLDEAAYVAVLQDAIAGRYTEAELTEFLVAATRTLTDEEVVALARARTAFTPRIDWDEPVVVDKHSMGGVPGSRITLIVVPIVAAYGLAMPKTSSRAITSAAGTADAMETIARVDLAHEDVRRCVAQARACIAWNGRLNHSVVDDVMNAITRPLRLDSRRWSVASILSKKYTAGATHVIVDLPYGPQTKLATRADAEALGALFEHVGKGLGLHVRALVTDGSGPIGRGIGPALEVRDVRLVLDNAPDAPADLRDKALRFAGEIIAFDPRVDSPEHGMQIAAALLHEGKARAAFDRIAAAQGVRCDPVAPGTHTLVVPATTRGRVAGVDGLQISGVARAAGAPRDGGAGVDMLCAIGAKVAPGQPLYRIHSDSAEALEAAAALVRAGGECCQAVRIDPD.

The segment at 1–177 (MKATGTFFFV…EAGTARFVEA (177 aa)) is ribose 1,5-bisphosphokinase. Residues 178 to 601 (LRTGTRTSAA…CCQAVRIDPD (424 aa)) are thymidinephosphorylase.

The protein in the N-terminal section; belongs to the ribose 1,5-bisphosphokinase family. In the C-terminal section; belongs to the thymidine/pyrimidine-nucleoside phosphorylase family. Type 2 subfamily.

It catalyses the reaction alpha-D-ribose 1,5-bisphosphate + ATP = 5-phospho-alpha-D-ribose 1-diphosphate + ADP. The enzyme catalyses thymidine + phosphate = 2-deoxy-alpha-D-ribose 1-phosphate + thymine. It participates in metabolic intermediate biosynthesis; 5-phospho-alpha-D-ribose 1-diphosphate biosynthesis; 5-phospho-alpha-D-ribose 1-diphosphate from D-ribose 5-phosphate (route II): step 3/3. Functionally, catalyzes the phosphorylation of ribose 1,5-bisphosphate to 5-phospho-D-ribosyl alpha-1-diphosphate (PRPP). The chain is Bifunctional ribose 1,5-bisphosphokinase-thymidine phosphorylase (phnN) from Cupriavidus necator (strain ATCC 17699 / DSM 428 / KCTC 22496 / NCIMB 10442 / H16 / Stanier 337) (Ralstonia eutropha).